A 247-amino-acid polypeptide reads, in one-letter code: Carboxy-S-adenosyl-L-methionine synthase (247 aa).

S-adenosyl-L-methionine is bound by residues Tyr39, Asp89–Asn90, Asp117–Ile118, Asn132, and Arg199.

The protein belongs to the class I-like SAM-binding methyltransferase superfamily. Cx-SAM synthase family. As to quaternary structure, homodimer.

The enzyme catalyses prephenate + S-adenosyl-L-methionine = carboxy-S-adenosyl-L-methionine + 3-phenylpyruvate + H2O. Its function is as follows. Catalyzes the conversion of S-adenosyl-L-methionine (SAM) to carboxy-S-adenosyl-L-methionine (Cx-SAM). The sequence is that of Carboxy-S-adenosyl-L-methionine synthase from Sodalis glossinidius (strain morsitans).